We begin with the raw amino-acid sequence, 306 residues long: Ornithine carbamoyltransferase (306 aa).

Carbamoyl phosphate-binding positions include 46-49 (STRT), Q73, R97, and 124-127 (HPTQ). L-ornithine is bound by residues N156, D220, and 224–225 (SM). Carbamoyl phosphate-binding positions include 260 to 261 (CL) and R288.

Belongs to the aspartate/ornithine carbamoyltransferase superfamily. OTCase family.

The protein localises to the cytoplasm. It catalyses the reaction carbamoyl phosphate + L-ornithine = L-citrulline + phosphate + H(+). Its pathway is amino-acid biosynthesis; L-arginine biosynthesis; L-arginine from L-ornithine and carbamoyl phosphate: step 1/3. Its function is as follows. Reversibly catalyzes the transfer of the carbamoyl group from carbamoyl phosphate (CP) to the N(epsilon) atom of ornithine (ORN) to produce L-citrulline. This is Ornithine carbamoyltransferase from Campylobacter jejuni subsp. jejuni serotype O:23/36 (strain 81-176).